The following is a 432-amino-acid chain: UDP-N-acetylmuramate--L-alanine ligase (432 aa).

G108 to S114 serves as a coordination point for ATP.

This sequence belongs to the MurCDEF family.

The protein localises to the cytoplasm. It catalyses the reaction UDP-N-acetyl-alpha-D-muramate + L-alanine + ATP = UDP-N-acetyl-alpha-D-muramoyl-L-alanine + ADP + phosphate + H(+). It functions in the pathway cell wall biogenesis; peptidoglycan biosynthesis. Cell wall formation. This chain is UDP-N-acetylmuramate--L-alanine ligase, found in Bacillus pumilus (strain SAFR-032).